The chain runs to 385 residues: S-type anion channel SLAH1 (385 aa).

The Cytoplasmic portion of the chain corresponds to 1–42; it reads MEIPRQEIHIEIDNSIPSSKEFKTGLADAKPVVLMSALRSLH. A helical transmembrane segment spans residues 43 to 65; sequence AGYFRISLSLCSQALLWKIMIAP. Over 66-81 the chain is Extracellular; that stretch reads ESPSMSHMHSKLPSMA. Residues 82-102 form a helical membrane-spanning segment; that stretch reads FHLLWYLALVTQVSLCFLYAL. Topologically, residues 103-114 are cytoplasmic; it reads KCIFFFDKVKEE. Residues 115-135 traverse the membrane as a helical segment; the sequence is FLHYIGVNYLYAPSISWLLML. Topologically, residues 136–150 are extracellular; that stretch reads QSAPMMEPNSVLYQT. A helical membrane pass occupies residues 151–171; it reads LFWIFAVPVLTLDIKLYGQWF. Residues 172-176 are Cytoplasmic-facing; sequence TTEKR. Residues 177 to 197 traverse the membrane as a helical segment; the sequence is FLSMLANPASQVSVIANLVAA. Over 198 to 207 the chain is Extracellular; the sequence is RGAAEMGWNE. The chain crosses the membrane as a helical span at residues 208–228; the sequence is CALCMFSLGMVHYLVIFVTLY. At 229 to 243 the chain is on the cytoplasmic side; sequence QRLPGGNNFPAKLRP. The helical transmembrane segment at 244 to 264 threads the bilayer; sequence IFFLFVAAPAMASLAWNSICG. Thr-265 is a topological domain (extracellular). Residues 266–286 form a helical membrane-spanning segment; it reads FDAVAKMLFFLSLFIFMSLVC. The Cytoplasmic segment spans residues 287–299; the sequence is RPNLFKKSMKRFN. The helical transmembrane segment at 300-320 threads the bilayer; it reads VAWWAYSFPLTFLALDSVQYA. Topologically, residues 321–330 are extracellular; the sequence is QEVKDPVGSG. Residues 331–351 form a helical membrane-spanning segment; that stretch reads LMLIFSSISVLIFLGMMVLTA. Residues 352–385 lie on the Cytoplasmic side of the membrane; sequence ANSNRLLRHDPVLGSATDPKDKQKTLSLNATNQN. A disordered region spans residues 366-385; that stretch reads SATDPKDKQKTLSLNATNQN. Residues 376-385 show a composition bias toward polar residues; it reads TLSLNATNQN.

The protein belongs to the SLAC1 S-type anion channel family. Homotrimer. Expressed in the vascular systems of root.

The protein localises to the cell membrane. Functionally, slow, weak voltage-dependent S-type anion efflux channel involved in maintenance of anion homeostasis. This is S-type anion channel SLAH1 (SLAH1) from Arabidopsis thaliana (Mouse-ear cress).